The chain runs to 307 residues: Aspartate carbamoyltransferase catalytic subunit (307 aa).

Residues Arg-54 and Thr-55 each coordinate carbamoyl phosphate. Residue Lys-83 coordinates L-aspartate. Carbamoyl phosphate is bound by residues Arg-104, His-132, and Gln-135. Positions 165 and 228 each coordinate L-aspartate. Positions 267 and 268 each coordinate carbamoyl phosphate.

The protein belongs to the aspartate/ornithine carbamoyltransferase superfamily. ATCase family. Heterododecamer (2C3:3R2) of six catalytic PyrB chains organized as two trimers (C3), and six regulatory PyrI chains organized as three dimers (R2).

It catalyses the reaction carbamoyl phosphate + L-aspartate = N-carbamoyl-L-aspartate + phosphate + H(+). Its pathway is pyrimidine metabolism; UMP biosynthesis via de novo pathway; (S)-dihydroorotate from bicarbonate: step 2/3. Its function is as follows. Catalyzes the condensation of carbamoyl phosphate and aspartate to form carbamoyl aspartate and inorganic phosphate, the committed step in the de novo pyrimidine nucleotide biosynthesis pathway. This Clostridium botulinum (strain Langeland / NCTC 10281 / Type F) protein is Aspartate carbamoyltransferase catalytic subunit.